The following is a 397-amino-acid chain: Mannonate dehydratase (397 aa).

It belongs to the mannonate dehydratase family. It depends on Fe(2+) as a cofactor. Mn(2+) serves as cofactor.

It catalyses the reaction D-mannonate = 2-dehydro-3-deoxy-D-gluconate + H2O. It functions in the pathway carbohydrate metabolism; pentose and glucuronate interconversion. In terms of biological role, catalyzes the dehydration of D-mannonate. The chain is Mannonate dehydratase from Yersinia pseudotuberculosis serotype O:1b (strain IP 31758).